Here is a 295-residue protein sequence, read N- to C-terminus: MIKYYNRKTNDYDIEKVAGEKYLNWTYSSPMGMNLLEIFIKKKFFSKIYGFYCDRRLSHNKIDKFINDFQIDMSLCENQTSDFKCFNDFFTRKLKKEARPIKADKNILISPGDGKILAYKNLNLNSVTEVKGINYSFYELINNDSLAKEYDNGTCLILRLCPTDYHRFHFIDNGTCENTIKLDGFYYSVNPIALSKIPSLFCKNKREYAIFHSENFGDVIFMEVGATCVGSIIQTYKPNTKIFKGDEKGYFKFGGSTVILFFKENTIKVDNDILNQSKLGYETSVIMGEPIGSKK.

Active-site charge relay system; for autoendoproteolytic cleavage activity residues include Asp113, His169, and Ser256. Ser256 functions as the Schiff-base intermediate with substrate; via pyruvic acid; for decarboxylase activity in the catalytic mechanism. At Ser256 the chain carries Pyruvic acid (Ser); by autocatalysis.

This sequence belongs to the phosphatidylserine decarboxylase family. PSD-B subfamily. Prokaryotic type II sub-subfamily. As to quaternary structure, heterodimer of a large membrane-associated beta subunit and a small pyruvoyl-containing alpha subunit. It depends on pyruvate as a cofactor. Post-translationally, is synthesized initially as an inactive proenzyme. Formation of the active enzyme involves a self-maturation process in which the active site pyruvoyl group is generated from an internal serine residue via an autocatalytic post-translational modification. Two non-identical subunits are generated from the proenzyme in this reaction, and the pyruvate is formed at the N-terminus of the alpha chain, which is derived from the carboxyl end of the proenzyme. The autoendoproteolytic cleavage occurs by a canonical serine protease mechanism, in which the side chain hydroxyl group of the serine supplies its oxygen atom to form the C-terminus of the beta chain, while the remainder of the serine residue undergoes an oxidative deamination to produce ammonia and the pyruvoyl prosthetic group on the alpha chain. During this reaction, the Ser that is part of the protease active site of the proenzyme becomes the pyruvoyl prosthetic group, which constitutes an essential element of the active site of the mature decarboxylase.

It localises to the cell membrane. It carries out the reaction a 1,2-diacyl-sn-glycero-3-phospho-L-serine + H(+) = a 1,2-diacyl-sn-glycero-3-phosphoethanolamine + CO2. Its pathway is phospholipid metabolism; phosphatidylethanolamine biosynthesis; phosphatidylethanolamine from CDP-diacylglycerol: step 2/2. Catalyzes the formation of phosphatidylethanolamine (PtdEtn) from phosphatidylserine (PtdSer). In Clostridium botulinum (strain Kyoto / Type A2), this protein is Phosphatidylserine decarboxylase proenzyme.